The chain runs to 435 residues: Citrate synthase (435 aa).

Active-site residues include H311 and D370.

It belongs to the citrate synthase family.

It catalyses the reaction oxaloacetate + acetyl-CoA + H2O = citrate + CoA + H(+). It participates in carbohydrate metabolism; tricarboxylic acid cycle; isocitrate from oxaloacetate: step 1/2. The chain is Citrate synthase (gltA) from Rickettsia slovaca (strain 13-B).